The chain runs to 304 residues: Protein phosphatase PTC7 homolog (304 aa).

Residues 1–68 (MFSVLSYGRL…GDDACFVARH (68 aa)) constitute a mitochondrion transit peptide. Residues 69–299 (RSADVLGVAD…DDITVLLSIV (231 aa)) form the PPM-type phosphatase domain. Positions 78, 79, and 223 each coordinate Mn(2+).

It belongs to the PP2C family. Interacts with FBXL4, BNIP3 and NIX; these interactions are important for ubiquitination and degradation of BNIP3 and NIX. The cofactor is Mg(2+). Mn(2+) is required as a cofactor. In terms of tissue distribution, expressed in keratinocytes (at protein level).

It is found in the mitochondrion matrix. The enzyme catalyses O-phospho-L-seryl-[protein] + H2O = L-seryl-[protein] + phosphate. It carries out the reaction O-phospho-L-threonyl-[protein] + H2O = L-threonyl-[protein] + phosphate. Its activity is regulated as follows. Inhibited by sodium orthovanadate. Functionally, protein phosphatase that plays an essential role in mitochondrial metabolism and biogenesis. Positively regulates biosynthesis of the ubiquinone, coenzyme Q. Dephosphorylates the ubiquinone biosynthesis protein COQ7 which is likely to lead to its activation. Serves as a crucial sensor for mitophagy, though the underlying mechanism remains ambiguous. May dephosphorylate BNIP3 and NIX and thereby directly regulates mitophagy receptor function and stability. Alternatively, promotes SCF-FBXL4-dependent ubiquitination and degradation of BNIP3 and NIX independently of its catalytic activity to restrain mitophagy. In Homo sapiens (Human), this protein is Protein phosphatase PTC7 homolog (PPTC7).